The sequence spans 943 residues: Nuclear factor of activated T-cells, cytoplasmic 1 (943 aa).

Residues 22-48 are disordered; that stretch reads GRGETLGPAPRAGGTMKSAEEEHYGYA. The segment at 118 to 123 is calcineurin-binding; it reads PRIEIT. Residues 126–218 form a transactivation domain A (TAD-A) region; that stretch reads LGLYHNNNQF…CVSPKTTDPE (93 aa). Residues 200-298 are disordered; that stretch reads PQTSPWQSPC…GSPRVSVTDD (99 aa). Residues 201 to 214 show a composition bias toward polar residues; that stretch reads QTSPWQSPCVSPKT. 2 repeat units span residues 203–219 and 233–249. The tract at residues 203–298 is 3 X SP repeats; sequence SPWQSPCVSP…GSPRVSVTDD (96 aa). Phosphoserine is present on residues Ser-233 and Ser-237. The span at 236 to 248 shows a compositional bias: polar residues; it reads HSPSTSPRASVTE. Ser-245 carries the post-translational modification Phosphoserine; by PKA. The Nuclear localization signal motif lies at 265-267; that stretch reads KRK. Ser-269 is subject to Phosphoserine; by PKA. A compositionally biased stretch (pro residues) spans 276-288; sequence PYSPHHSPTPSPH. Repeat 3 spans residues 282 to 298; that stretch reads SPTPSPHGSPRVSVTDD. Residue Ser-294 is modified to Phosphoserine; by PKA. Residues 310–321 carry the Nuclear export signal motif; it reads SAIVAAINALTT. An RHD domain is found at 410 to 592; sequence PTLPALDWQL…NPIECSQRSA (183 aa). The DNA-binding element occupies 439–446; the sequence is RAHYETEG. Residues 682 to 684 carry the Nuclear localization signal motif; sequence KRK. Positions 703 to 943 are transactivation domain B (TAD-B); that stretch reads TEPTDDYEPA…NDLSSTSTHS (241 aa). Residues 787–912 are disordered; the sequence is HLGLPQPAGE…SPNLAPIPVT (126 aa). Residues 846 to 855 are compositionally biased toward pro residues; sequence SPSPPLPPAT. The Nuclear export signal motif lies at 924 to 933; that stretch reads YLDDVNEIIR.

As to quaternary structure, member of the multicomponent NFATC transcription complex that consists of at least two components, a pre-existing cytoplasmic component NFATC2 and an inducible nuclear component NFATC1. Other members such as NFATC4, NFATC3 or members of the activating protein-1 family, MAF, GATA4 and Cbp/p300 can also bind the complex. NFATC proteins bind to DNA as monomers. Interacts with HOMER2 and HOMER3; this interaction may compete with calcineurin/PPP3CA-binding and hence prevent NFATC1 dephosphorylation and activation. Interacts with TLE6/GRG6. Post-translationally, phosphorylated by NFATC-kinase and GSK3B; phosphorylation induces NFATC1 nuclear exit and dephosphorylation by calcineurin promotes nuclear import. Phosphorylation by PKA and DYRK2 negatively modulates nuclear accumulation, and promotes subsequent phosphorylation by GSK3B or casein kinase 1. As to expression, expressed in thymus, peripheral leukocytes as T-cells and spleen. Isoforms A are preferentially expressed in effector T-cells (thymus and peripheral leukocytes) whereas isoforms B and isoforms C are preferentially expressed in naive T-cells (spleen). Isoforms B are expressed in naive T-cells after first antigen exposure and isoforms A are expressed in effector T-cells after second antigen exposure. Isoforms IA are widely expressed but not detected in liver nor pancreas, neural expression is strongest in corpus callosum. Isoforms IB are expressed mostly in muscle, cerebellum, placenta and thymus, neural expression in fetal and adult brain, strongest in corpus callosum.

Its subcellular location is the cytoplasm. It localises to the nucleus. Functionally, plays a role in the inducible expression of cytokine genes in T-cells, especially in the induction of the IL-2 or IL-4 gene transcription. Also controls gene expression in embryonic cardiac cells. Could regulate not only the activation and proliferation but also the differentiation and programmed death of T-lymphocytes as well as lymphoid and non-lymphoid cells. Required for osteoclastogenesis and regulates many genes important for osteoclast differentiation and function. The polypeptide is Nuclear factor of activated T-cells, cytoplasmic 1 (NFATC1) (Homo sapiens (Human)).